Reading from the N-terminus, the 138-residue chain is Proofreading thioesterase EntH (138 aa).

The active-site Nucleophile or proton acceptor is E64.

Belongs to the thioesterase PaaI family. In terms of assembly, homotetramer. Dimer of dimers. Interacts specifically with the aryl carrier protein (ArCP) domain of EntB.

It is found in the cytoplasm. It functions in the pathway siderophore biosynthesis; enterobactin biosynthesis. Functionally, required for optimal enterobactin synthesis. Acts as a proofreading enzyme that prevents EntB misacylation by hydrolyzing the thioester bound existing between EntB and wrongly charged molecules. The chain is Proofreading thioesterase EntH from Salmonella arizonae (strain ATCC BAA-731 / CDC346-86 / RSK2980).